A 225-amino-acid chain; its full sequence is Ribonuclease 3 (225 aa).

The region spanning leucine 5–aspartate 127 is the RNase III domain. Residue glutamate 40 participates in Mg(2+) binding. Residue aspartate 44 is part of the active site. Mg(2+) is bound by residues aspartate 113 and glutamate 116. The active site involves glutamate 116. The 71-residue stretch at aspartate 154–methionine 224 folds into the DRBM domain.

The protein belongs to the ribonuclease III family. Homodimer. It depends on Mg(2+) as a cofactor.

The protein resides in the cytoplasm. It catalyses the reaction Endonucleolytic cleavage to 5'-phosphomonoester.. Digests double-stranded RNA. Involved in the processing of primary rRNA transcript to yield the immediate precursors to the large and small rRNAs (23S and 16S). Also processes some mRNAs, and tRNAs when they are encoded in the rRNA operon. Its function is as follows. CRISPR (clustered regularly interspaced short palindromic repeat) is an adaptive immune system that provides protection against mobile genetic elements (viruses, transposable elements and conjugative plasmids). CRISPR clusters contain spacers, sequences complementary to antecedent mobile elements, and target invading nucleic acids. CRISPR clusters are transcribed and processed into CRISPR RNA (crRNA). In this organism endogenous ribonuclease 3 and Cas9 are required for correct coprocessing of pre-crRNA and the trans-encoded small RNA (tracrRNA). Cas9, crRNA and tracrRNA are required for cleavage of invading DNA. Complements pre-crRNA and tracrRNA coprocessing defects in an rnc deletion in S.pyogenes strain 370. The polypeptide is Ribonuclease 3 (Pasteurella multocida (strain Pm70)).